The primary structure comprises 1925 residues: Methylcytosine dioxygenase tet3-A (1925 aa).

The CXXC-type zinc finger occupies 62-103 (SNKKRKRCGVCVPCLRKEPCGACYNCVNRSTSHQICKMRKCE). Positions 69, 72, 75, 81, 84, 87, 97, and 102 each coordinate Zn(2+). Disordered stretches follow at residues 457-476 (KNAL…QNKK), 630-685 (KSQK…NAVF), 774-812 (GAKD…QNDL), and 833-892 (DFSL…PISH). Positions 465-476 (SPRQTSWEQNKK) are enriched in polar residues. The span at 665–677 (KPPRKQVQIKKPR) shows a compositional bias: basic residues. The span at 777–797 (DSCPTPSTDDASSSSGQGDSA) shows a compositional bias: low complexity. Composition is skewed to polar residues over residues 841-856 (APSQ…QISG) and 883-892 (PALSNNPISH). Residues cysteine 982, cysteine 984, cysteine 1042, histidine 1068, and cysteine 1070 each coordinate Zn(2+). Position 1110 (arginine 1110) interacts with 2-oxoglutarate. Cysteine 1120, cysteine 1122, cysteine 1138, cysteine 1147, and cysteine 1207 together coordinate Zn(2+). Cysteine 1223 serves as a coordination point for 2-oxoglutarate. Histidine 1229 lines the Zn(2+) pocket. Fe cation contacts are provided by histidine 1231 and aspartate 1233. Position 1265 (histidine 1265) interacts with 2-oxoglutarate. Disordered regions lie at residues 1307-1364 (SEPA…QTKP), 1474-1513 (LADG…KSFN), 1556-1600 (SVHS…LPND), and 1722-1769 (NWAS…EEEI). The segment covering 1316–1347 (RQLDAKKAAAEKKKLQKEKLVSPDKTKQEPAD) has biased composition (basic and acidic residues). Residues 1350–1363 (MCQQNPGVPQQQTK) are compositionally biased toward polar residues. Basic and acidic residues predominate over residues 1490–1499 (SYRRSSEVPH). 3 stretches are compositionally biased toward polar residues: residues 1502–1513 (SLQNPNSQKSFN), 1556–1572 (SVHS…QTSD), and 1730–1742 (VGNS…SQNH). Residue histidine 1804 participates in Fe cation binding. 2-oxoglutarate is bound at residue 1819 to 1821 (RIS). The stretch at 1837–1870 (LALWEAKMKLLAERARVKEEEAARLGIKQEVKSL) forms a coiled coil.

This sequence belongs to the TET family. Fe(2+) is required as a cofactor. Requires Zn(2+) as cofactor. As to expression, detected in embryo (at protein level). Detected in embryonic head, in developing brain, neural tube and eye.

The protein localises to the nucleus. It localises to the chromosome. It carries out the reaction a 5-methyl-2'-deoxycytidine in DNA + 2-oxoglutarate + O2 = a 5-hydroxymethyl-2'-deoxycytidine in DNA + succinate + CO2. The enzyme catalyses a 5-hydroxymethyl-2'-deoxycytidine in DNA + 2-oxoglutarate + O2 = a 5-formyl-2'-deoxycytidine in DNA + succinate + CO2 + H2O. It catalyses the reaction a 5-formyl-2'-deoxycytidine in DNA + 2-oxoglutarate + O2 = a 5-carboxyl-2'-deoxycytidine in DNA + succinate + CO2 + H(+). Functionally, dioxygenase that catalyzes the conversion of the modified genomic base 5-methylcytosine (5mC) into 5-hydroxymethylcytosine (5hmC) and plays a key role in epigenetic chromatin reprogramming during embryonic development. Conversion of 5mC into 5hmC probably constitutes the first step in cytosine demethylation. Selectively binds to the promoter region of target genes and contributes to regulate the expression of numerous developmental genes, including pax6, rax, sox9 and six3. May also contribute to the regulation of target genes in ways that do not require its enzyme activity. The polypeptide is Methylcytosine dioxygenase tet3-A (Xenopus laevis (African clawed frog)).